Reading from the N-terminus, the 449-residue chain is Dynein regulatory complex protein 10 (449 aa).

Residues alanine 90–glycine 125 are a coiled coil. The IQ domain occupies methionine 400–glycine 429. Positions serine 422–lysine 449 are disordered. Residues lysine 430–lysine 449 are compositionally biased toward basic and acidic residues.

This sequence belongs to the DRC10 family. As to quaternary structure, component of the nexin-dynein regulatory complex (N-DRC). Interacts with CFAP52.

The protein resides in the cytoplasm. It localises to the cytoskeleton. The protein localises to the flagellum axoneme. Functionally, component of the nexin-dynein regulatory complex (N-DRC), a key regulator of ciliary/flagellar motility which maintains the alignment and integrity of the distal axoneme and regulates microtubule sliding in motile axonemes. The chain is Dynein regulatory complex protein 10 (IQCD) from Homo sapiens (Human).